A 243-amino-acid chain; its full sequence is Ubiquinone/menaquinone biosynthesis C-methyltransferase UbiE (243 aa).

S-adenosyl-L-methionine contacts are provided by residues Thr69, Asp90, and Asp116–Ala117.

This sequence belongs to the class I-like SAM-binding methyltransferase superfamily. MenG/UbiE family.

It carries out the reaction a 2-demethylmenaquinol + S-adenosyl-L-methionine = a menaquinol + S-adenosyl-L-homocysteine + H(+). The enzyme catalyses a 2-methoxy-6-(all-trans-polyprenyl)benzene-1,4-diol + S-adenosyl-L-methionine = a 5-methoxy-2-methyl-3-(all-trans-polyprenyl)benzene-1,4-diol + S-adenosyl-L-homocysteine + H(+). It functions in the pathway quinol/quinone metabolism; menaquinone biosynthesis; menaquinol from 1,4-dihydroxy-2-naphthoate: step 2/2. It participates in cofactor biosynthesis; ubiquinone biosynthesis. Functionally, methyltransferase required for the conversion of demethylmenaquinol (DMKH2) to menaquinol (MKH2) and the conversion of 2-polyprenyl-6-methoxy-1,4-benzoquinol (DDMQH2) to 2-polyprenyl-3-methyl-6-methoxy-1,4-benzoquinol (DMQH2). The polypeptide is Ubiquinone/menaquinone biosynthesis C-methyltransferase UbiE (Cupriavidus taiwanensis (strain DSM 17343 / BCRC 17206 / CCUG 44338 / CIP 107171 / LMG 19424 / R1) (Ralstonia taiwanensis (strain LMG 19424))).